Here is a 908-residue protein sequence, read N- to C-terminus: Adhesion G-protein coupled receptor F1 (908 aa).

An N-terminal signal peptide occupies residues Met-1–Gly-20. The Extracellular segment spans residues Phe-21–Tyr-588. N-linked (GlcNAc...) asparagine glycosylation is found at Asn-133, Asn-167, Asn-328, Asn-353, Asn-367, Asn-388, Asn-422, Asn-453, Asn-510, Asn-519, Asn-526, and Asn-551. The SEA domain maps to Glu-147–Pro-255. Positions Pro-434–Ser-577 constitute a GAIN-B domain. 2 cysteine pairs are disulfide-bonded: Cys-532/Cys-559 and Cys-547/Cys-561. Residues Cys-532–Ser-577 form a GPS region. The interval Ser-566 to Phe-574 is stachel. A helical transmembrane segment spans residues Ile-589–Trp-609. The Cytoplasmic segment spans residues Lys-610–Asn-622. A helical membrane pass occupies residues Ile-623 to Ala-643. Over Thr-644–Ala-658 the chain is Extracellular. Cys-655 and Cys-731 form a disulfide bridge. A helical transmembrane segment spans residues Val-659–Leu-679. Residues Leu-680 to Met-697 lie on the Cytoplasmic side of the membrane. Residues Ala-698–Val-718 traverse the membrane as a helical segment. At Thr-719–Leu-742 the chain is on the extracellular side. Asn-734 is a glycosylation site (N-linked (GlcNAc...) asparagine). The helical transmembrane segment at Leu-743–Val-763 threads the bilayer. Over Leu-764 to Lys-789 the chain is Cytoplasmic. A helical transmembrane segment spans residues Ser-790–Ala-810. Over Asn-811 to His-818 the chain is Extracellular. Residues Val-819–Leu-839 traverse the membrane as a helical segment. Topologically, residues Asp-840–Glu-908 are cytoplasmic.

It belongs to the G-protein coupled receptor 2 family. Adhesion G-protein coupled receptor (ADGR) subfamily. In terms of assembly, heterodimer of 2 chains generated by proteolytic processing; the large extracellular N-terminal fragment and the membrane-bound C-terminal fragment predominantly remain associated and non-covalently linked. Autoproteolytically processed at the GPS region of the GAIN-B domain; this cleavage modulates receptor activity. In terms of tissue distribution, expressed in liver, kidney and adrenal gland. In kidney strong expression in the renal pelvis and the ureter.

Its subcellular location is the cell membrane. With respect to regulation, forms a heterodimer of 2 chains generated by proteolytic processing that remain associated through non-covalent interactions mediated by the GAIN-B domain. In the inactivated receptor, the Stachel sequence (also named stalk) is embedded in the GAIN-B domain, where it adopts a beta-strand conformation. On activation, the Stachel moves into the 7 transmembrane region and adopts a twisted hook-shaped configuration that forms contacts within the receptor, leading to coupling of a G-alpha protein, which activates signaling. The cleaved GAIN-B and N-terminal domains can then dissociate from the rest of the receptor. Adhesion G-protein coupled receptor (aGPCR) for N-docosahexaenoylethanolamine (synaptamide), an omega-3 fatty acid lipid highly enriched in the brain. Ligand binding causes a conformation change that triggers signaling via guanine nucleotide-binding proteins (G proteins) and modulates the activity of downstream effectors, such as adenylate cyclase. ADGRF1 is coupled to G(s) G proteins and mediates activation of adenylate cyclase activity. Also able to couple to G(q), G(i) and G(12)/G(13) G proteins; additional evidence is however required to confirm this result in vivo. Involved in the development of neurons and cognitive function. In liver, involved in fat accumulation. The protein is Adhesion G-protein coupled receptor F1 of Mus musculus (Mouse).